The sequence spans 460 residues: Bifunctional protein GlmU (460 aa).

A pyrophosphorylase region spans residues 1-232 (MALNVVILAA…AIEVEGANNR (232 aa)). Residues 8-11 (LAAG), Lys-22, Gln-73, 78-79 (GT), 100-102 (YGD), Gly-137, Glu-157, Asn-172, and Asn-230 contribute to the UDP-N-acetyl-alpha-D-glucosamine site. Residue Asp-102 participates in Mg(2+) binding. Asn-230 is a Mg(2+) binding site. A linker region spans residues 233 to 253 (VQLAQLERAYQAREAEKLMLA). Residues 254-460 (GANLRDPSRI…GWQRPVKIKK (207 aa)) form an N-acetyltransferase region. UDP-N-acetyl-alpha-D-glucosamine is bound by residues Arg-336 and Lys-354. His-366 acts as the Proton acceptor in catalysis. UDP-N-acetyl-alpha-D-glucosamine contacts are provided by Tyr-369 and Asn-380. Acetyl-CoA contacts are provided by residues Ala-383, 389 to 390 (NY), Ser-408, Ala-426, and Arg-443.

In the N-terminal section; belongs to the N-acetylglucosamine-1-phosphate uridyltransferase family. The protein in the C-terminal section; belongs to the transferase hexapeptide repeat family. As to quaternary structure, homotrimer. Mg(2+) is required as a cofactor.

The protein resides in the cytoplasm. The catalysed reaction is alpha-D-glucosamine 1-phosphate + acetyl-CoA = N-acetyl-alpha-D-glucosamine 1-phosphate + CoA + H(+). It carries out the reaction N-acetyl-alpha-D-glucosamine 1-phosphate + UTP + H(+) = UDP-N-acetyl-alpha-D-glucosamine + diphosphate. The protein operates within nucleotide-sugar biosynthesis; UDP-N-acetyl-alpha-D-glucosamine biosynthesis; N-acetyl-alpha-D-glucosamine 1-phosphate from alpha-D-glucosamine 6-phosphate (route II): step 2/2. It functions in the pathway nucleotide-sugar biosynthesis; UDP-N-acetyl-alpha-D-glucosamine biosynthesis; UDP-N-acetyl-alpha-D-glucosamine from N-acetyl-alpha-D-glucosamine 1-phosphate: step 1/1. Its pathway is bacterial outer membrane biogenesis; LPS lipid A biosynthesis. Functionally, catalyzes the last two sequential reactions in the de novo biosynthetic pathway for UDP-N-acetylglucosamine (UDP-GlcNAc). The C-terminal domain catalyzes the transfer of acetyl group from acetyl coenzyme A to glucosamine-1-phosphate (GlcN-1-P) to produce N-acetylglucosamine-1-phosphate (GlcNAc-1-P), which is converted into UDP-GlcNAc by the transfer of uridine 5-monophosphate (from uridine 5-triphosphate), a reaction catalyzed by the N-terminal domain. The chain is Bifunctional protein GlmU from Shewanella baltica (strain OS155 / ATCC BAA-1091).